A 352-amino-acid polypeptide reads, in one-letter code: Transcription factor MYB86 (352 aa).

2 consecutive HTH myb-type domains span residues 9–61 (KQKL…INYL) and 62–116 (RPDL…KKKL). 2 DNA-binding regions (H-T-H motif) span residues 37–61 (WSSV…INYL) and 89–112 (WSQI…NSCL).

As to expression, expressed in stems, flowers and seeds. Weakly expressed in leaves and roots.

The protein resides in the nucleus. Functionally, probable transcription factor. In Arabidopsis thaliana (Mouse-ear cress), this protein is Transcription factor MYB86 (MYB86).